Here is a 105-residue protein sequence, read N- to C-terminus: RxLR effector protein PITG_18670 (105 aa).

An N-terminal signal peptide occupies residues 1-21; the sequence is MRSIFYFALAFAALTCSNASA. A RxLR-dEER motif is present at residues 39 to 57; the sequence is RSLRVAGQEVARGDRGEEI.

Belongs to the RxLR effector family.

Its subcellular location is the secreted. It is found in the host nucleus. The protein resides in the host nucleolus. It localises to the host cytoplasm. Effector that enhances P.infestans colonization of Nicotiana benthamiana leaves. The sequence is that of RxLR effector protein PITG_18670 from Phytophthora infestans (strain T30-4) (Potato late blight agent).